The following is an 84-amino-acid chain: U-actitoxin-Avd8e (84 aa).

Residues 1–22 (MASARTLVLLLIGAVLMCQVSA) form the signal peptide. Positions 23-41 (DSELLNEILAAHMEEDMPE) are excised as a propeptide. Residues 44–84 (CIDRYRSNICGSVIRPLDCTRRKSRMGRFARTNCKKLCGFC) enclose the ShKT domain. 3 disulfides stabilise this stretch: Cys44-Cys84, Cys53-Cys77, and Cys62-Cys81.

Belongs to the sea anemone 8 toxin family.

The protein localises to the secreted. It is found in the nematocyst. In Anemonia viridis (Snakelocks anemone), this protein is U-actitoxin-Avd8e.